The following is a 481-amino-acid chain: Ribulose bisphosphate carboxylase large chain (481 aa).

Residues 1 to 2 (MS) constitute a propeptide that is removed on maturation. Position 3 is an N-acetylproline (Pro-3). An N6,N6,N6-trimethyllysine modification is found at Lys-14. The substrate site is built by Asn-123 and Thr-173. Lys-175 (proton acceptor) is an active-site residue. Substrate is bound at residue Lys-177. Positions 201, 203, and 204 each coordinate Mg(2+). An N6-carboxylysine modification is found at Lys-201. Residue His-294 is the Proton acceptor of the active site. Arg-295, His-327, and Ser-379 together coordinate substrate.

This sequence belongs to the RuBisCO large chain family. Type I subfamily. In terms of assembly, heterohexadecamer of 8 large chains and 8 small chains; disulfide-linked. The disulfide link is formed within the large subunit homodimers. Mg(2+) serves as cofactor. In terms of processing, the disulfide bond which can form in the large chain dimeric partners within the hexadecamer appears to be associated with oxidative stress and protein turnover.

It is found in the plastid. The protein resides in the chloroplast. The catalysed reaction is 2 (2R)-3-phosphoglycerate + 2 H(+) = D-ribulose 1,5-bisphosphate + CO2 + H2O. It carries out the reaction D-ribulose 1,5-bisphosphate + O2 = 2-phosphoglycolate + (2R)-3-phosphoglycerate + 2 H(+). Functionally, ruBisCO catalyzes two reactions: the carboxylation of D-ribulose 1,5-bisphosphate, the primary event in carbon dioxide fixation, as well as the oxidative fragmentation of the pentose substrate in the photorespiration process. Both reactions occur simultaneously and in competition at the same active site. The protein is Ribulose bisphosphate carboxylase large chain of Coffea arabica (Arabian coffee).